The primary structure comprises 206 residues: Protein Mabiki (206 aa).

Residues 54–77 (FSDQDADFPPLPKRRRLGSSSSSV) are disordered.

In terms of biological role, plays a role in inducing apoptosis and is involved in the repair of head patterning defects in the embryo caused by extra maternal copies of the homeotic gene bicoid. The sequence is that of Protein Mabiki from Drosophila melanogaster (Fruit fly).